We begin with the raw amino-acid sequence, 65 residues long: Disintegrin CC5 (65 aa).

The 65-residue stretch at 1–65 (MNSAHPCCDP…SDCPRNRYKS (65 aa)) folds into the Disintegrin domain. Disulfide bonds link C7/C30, C21/C27, C26/C51, and C39/C58. Positions 43–45 (RGD) match the Cell attachment site motif.

Belongs to the disintegrin family. Dimeric disintegrin subfamily. In terms of assembly, homodimer; disulfide-linked. As to expression, expressed by the venom gland.

It is found in the secreted. Its function is as follows. Binds and inhibits integrins alpha-IIb/beta-3 (ITGA2B/ITGB3), alpha-V/beta-3 (ITGAV/ITGB3) and alpha-5/beta-1 (ITGA5/ITGB1). This chain is Disintegrin CC5, found in Cerastes cerastes (Horned desert viper).